The sequence spans 251 residues: uncharacterized protein (251 aa).

Positions 1–18 (MRILIILSIILCSLFARA) are cleaved as a signal peptide.

It belongs to the MlaA family.

This is an uncharacterized protein from Rickettsia felis (strain ATCC VR-1525 / URRWXCal2) (Rickettsia azadi).